The chain runs to 285 residues: Glutamate racemase (285 aa).

Residues 28–29 (DS) and 60–61 (YG) each bind substrate. The active-site Proton donor/acceptor is the cysteine 92. 93 to 94 (NT) lines the substrate pocket. Cysteine 204 functions as the Proton donor/acceptor in the catalytic mechanism. Position 205–206 (205–206 (TH)) interacts with substrate.

Belongs to the aspartate/glutamate racemases family.

The catalysed reaction is L-glutamate = D-glutamate. It functions in the pathway cell wall biogenesis; peptidoglycan biosynthesis. In terms of biological role, provides the (R)-glutamate required for cell wall biosynthesis. The polypeptide is Glutamate racemase (Escherichia fergusonii (strain ATCC 35469 / DSM 13698 / CCUG 18766 / IAM 14443 / JCM 21226 / LMG 7866 / NBRC 102419 / NCTC 12128 / CDC 0568-73)).